A 720-amino-acid chain; its full sequence is uncharacterized protein (720 aa).

The N-myristoyl glycine; by host moiety is linked to residue Gly2.

This is an uncharacterized protein from Cryphonectria parasitica mycoreovirus 1 (strain 9B21) (CpMYRV-1).